Here is a 716-residue protein sequence, read N- to C-terminus: Tensin-4 (716 aa).

The signal sequence occupies residues 1–17 (MSQVMSSPLLAGGPAVG). Disordered stretches follow at residues 119–274 (LPPG…VSML), 301–322 (QSSS…NLGP), 334–366 (VPSN…PSIT), and 379–436 (GFPE…RDMQ). Over residues 138-150 (KKKEEPEALDIKY) the composition is skewed to basic and acidic residues. The span at 197-206 (SSESLIFSGS) shows a compositional bias: polar residues. The segment covering 214 to 228 (PAPPSAVPSSHPPTS) has biased composition (pro residues). Residue S248 is modified to Phosphoserine. Residues 265 to 274 (PQLSSRVSML) show a composition bias toward polar residues. Residues 402–419 (ATSSSMPCPATRSHSQTL) are compositionally biased toward polar residues. An SH2 domain is found at 449–556 (WFKPSISREQ…ALPCKLVIPQ (108 aa)). A PTB domain is found at 583 to 704 (CHALYLSSVS…TLQPASQVIR (122 aa)).

This sequence belongs to the PTEN phosphatase protein family. As to quaternary structure, interacts (via SH2 domain) with Rho GTPase-activating protein DLC1 (via C-terminus); the interaction is independent of DLC1 tyrosine phosphorylation. Interacts with integrin ITGB1; the interaction displaces tensin TNS3 from the ITGB1 cytoplasmic tail and promotes ITGB1 stability. Interacts (via SH2 domain) with E3 ubiquitin-protein ligase CBL (phosphorylated on 'Tyr-782'); the interaction is enhanced in the presence of EGF and reduces interaction of CBL with EGFR. Interacts (via SH2 domain) with receptor tyrosine kinase MET (when phosphorylated); the interaction increases MET protein stability.

The protein localises to the cell junction. It is found in the focal adhesion. The protein resides in the cytoplasm. It localises to the cytoskeleton. Promotes EGF-induced cell migration by displacing tensin TNS3 from the cytoplasmic tail of integrin ITGB1 which results in dissociation of TNS3 from focal adhesions, disassembly of actin stress fibers and initiation of cell migration. Suppresses ligand-induced degradation of EGFR by reducing EGFR ubiquitination in the presence of EGF. Increases MET protein stability by inhibiting MET endocytosis and subsequent lysosomal degradation which leads to increased cell survival, proliferation and migration. The protein is Tensin-4 (TNS4) of Bos taurus (Bovine).